Consider the following 335-residue polypeptide: NADP(+)-dependent glycerol-3-phosphate dehydrogenase (335 aa).

Gly137 provides a ligand contact to sn-glycerol 3-phosphate. Residue Ala141 participates in NADPH binding. Positions 192, 250, 259, and 260 each coordinate sn-glycerol 3-phosphate. Catalysis depends on Lys192, which acts as the Proton acceptor. Arg259 serves as a coordination point for NADPH. Val287 and Glu289 together coordinate NADPH.

This sequence belongs to the NAD-dependent glycerol-3-phosphate dehydrogenase family. As to quaternary structure, homodimer.

The protein resides in the cytoplasm. It carries out the reaction sn-glycerol 3-phosphate + NADP(+) = dihydroxyacetone phosphate + NADPH + H(+). Its function is as follows. Catalyzes the reduction of the glycolytic intermediate dihydroxyacetone phosphate (DHAP) to sn-glycerol 3-phosphate (G3P). Shows a 15-fold preference for NADPH over NADH in the reduction process. Can also catalyze the reverse reaction in vitro. Shows no activity with dihydroxyacetone, glycerol, glycerol-2-phosphate, D-glyceraldehyde-3-phosphate, DL-glyceraldehyde, D-erythrose-4-phosphate, D-fructose-6-phosphate, beta-D-glucose-6-phosphate, or alpha-D-galactose-1-phosphate. The protein is NADP(+)-dependent glycerol-3-phosphate dehydrogenase of Archaeoglobus fulgidus (strain ATCC 49558 / DSM 4304 / JCM 9628 / NBRC 100126 / VC-16).